A 479-amino-acid polypeptide reads, in one-letter code: Long-chain alcohol oxidase (479 aa).

Positions 14–183 constitute an FAD-binding PCMH-type domain; that stretch reads QILRPSAAYT…LAVRIRCREQ (170 aa). Position 49 is a pros-8alpha-FAD histidine (His49). Residues Thr113, Gly116, 120–123, and Ile173 contribute to the FAD site; that span reads TGTH. Residues 241–258 form a helical membrane-spanning segment; sequence LYWLGTMDYGLILQILFL. Residues Arg369 and His425 each coordinate FAD.

This sequence belongs to the oxygen-dependent FAD-linked oxidoreductase family. Requires FAD as cofactor.

It localises to the cell membrane. The enzyme catalyses a long-chain primary fatty alcohol + O2 = a long-chain fatty aldehyde + H2O2. The catalysed reaction is dodecan-1-ol + O2 = dodecanal + H2O2. It carries out the reaction tetradecan-1-ol + O2 = tetradecanal + H2O2. It catalyses the reaction octan-1-ol + O2 = octanal + H2O2. The enzyme catalyses decan-1-ol + O2 = decanal + H2O2. The protein operates within lipid metabolism; fatty acid metabolism. Its function is as follows. In vitro catalyzes the oxidation of a range of fatty alcohols having a carbon chain length of six and above, with a reduction of O2 to H2O2. Shows the highest activity with 1-dodecanol. Is likely involved in lipid metabolism. In Uncultured marine euryarchaeote, this protein is Long-chain alcohol oxidase.